Reading from the N-terminus, the 483-residue chain is 6-phosphogluconate dehydrogenase, decarboxylating 1 (483 aa).

NADP(+) contacts are provided by residues 11-16 (GLAVMG), 34-36 (NRT), 78-80 (VKA), and Asn106. Substrate contacts are provided by residues Asn106 and 132 to 134 (SGG). Lys186 functions as the Proton acceptor in the catalytic mechanism. 189-190 (HN) serves as a coordination point for substrate. Glu193 acts as the Proton donor in catalysis. Substrate is bound by residues Tyr194, Lys264, Arg291, Arg454, and His460.

It belongs to the 6-phosphogluconate dehydrogenase family. As to quaternary structure, homodimer.

It localises to the cytoplasm. The catalysed reaction is 6-phospho-D-gluconate + NADP(+) = D-ribulose 5-phosphate + CO2 + NADPH. The protein operates within carbohydrate degradation; pentose phosphate pathway; D-ribulose 5-phosphate from D-glucose 6-phosphate (oxidative stage): step 3/3. Its function is as follows. Catalyzes the oxidative decarboxylation of 6-phosphogluconate to ribulose 5-phosphate and CO(2), with concomitant reduction of NADP to NADPH. This is 6-phosphogluconate dehydrogenase, decarboxylating 1 (pgdC) from Spinacia oleracea (Spinach).